The sequence spans 249 residues: Aquaporin TIP4-1 (249 aa).

At Met-1 the chain carries N-acetylmethionine. The Cytoplasmic portion of the chain corresponds to 1 to 20 (MKKIELGHHSEAAKPDCIKA). Residue Lys-3 is modified to N6,N6-dimethyllysine. A helical membrane pass occupies residues 21 to 41 (LIVEFITTFLFVFAGVGSAMA). At 42-49 (TDSLVGNT) the chain is on the vacuolar side. Residues 50–70 (LVGLFAVAVAHAFVVAVMISA) form a helical membrane-spanning segment. The Cytoplasmic segment spans residues 71–105 (GHISGGHLNPAVTLGLLLGGHISVFRAFLYWIDQL). An NPA 1 motif is present at residues 79 to 81 (NPA). Residues 106–126 (LASSAACFLLSYLTGGMGTPV) form a helical membrane-spanning segment. Topologically, residues 127 to 137 (HTLASGVSYTQ) are vacuolar. The helical transmembrane segment at 138-158 (GIIWEIILTFSLLFTVYATIV) threads the bilayer. Over 159–166 (DPKKGSLD) the chain is Cytoplasmic. Residues 167–187 (GFGPLLTGFVVGANILAGGAF) form a helical membrane-spanning segment. Over 188–212 (SGASMNPARSFGPALVSGNWTDHWV) the chain is Vacuolar. Residues 193-195 (NPA) carry the NPA 2 motif. A helical transmembrane segment spans residues 213–233 (YWVGPLIGGGLAGFIYENVLI). Over 234–249 (DRPHVPVADDEQPLLN) the chain is Cytoplasmic.

Belongs to the MIP/aquaporin (TC 1.A.8) family. TIP (TC 1.A.8.10) subfamily. Expressed in roots.

The protein localises to the vacuole membrane. Aquaporins facilitate the transport of water and small neutral solutes across cell membranes. Transports urea in yeast cells in a pH-independent manner. This chain is Aquaporin TIP4-1 (TIP4-1), found in Arabidopsis thaliana (Mouse-ear cress).